Consider the following 132-residue polypeptide: UPF0102 protein Acel_1550 (132 aa).

It belongs to the UPF0102 family.

The sequence is that of UPF0102 protein Acel_1550 from Acidothermus cellulolyticus (strain ATCC 43068 / DSM 8971 / 11B).